The primary structure comprises 344 residues: Centromere protein N (344 aa).

This sequence belongs to the CENP-N/CHL4 family.

It is found in the nucleus. The protein localises to the chromosome. Its subcellular location is the centromere. Its function is as follows. Probable component of a centromeric complex involved in assembly of kinetochore proteins, mitotic progression and chromosome segregation. The sequence is that of Centromere protein N (CENPN) from Gallus gallus (Chicken).